The sequence spans 134 residues: Global transcriptional regulator Spx (134 aa).

Cysteine 10 and cysteine 13 are disulfide-bonded.

It belongs to the ArsC family. Spx subfamily. In terms of assembly, interacts with the C-terminal domain of the alpha subunit of the RNAP.

The protein resides in the cytoplasm. Global transcriptional regulator that plays a key role in stress response and exerts either positive or negative regulation of genes. Acts by interacting with the C-terminal domain of the alpha subunit of the RNA polymerase (RNAP). This interaction can enhance binding of RNAP to the promoter region of target genes and stimulate their transcription, or block interaction of RNAP with activator. This chain is Global transcriptional regulator Spx, found in Streptococcus pyogenes serotype M3 (strain ATCC BAA-595 / MGAS315).